A 350-amino-acid polypeptide reads, in one-letter code: Farnesyl pyrophosphate synthase (350 aa).

Isopentenyl diphosphate is bound by residues Lys-55, Arg-58, and Gln-94. Residues Asp-101 and Asp-105 each coordinate Mg(2+). Arg-110 is a binding site for dimethylallyl diphosphate. Residue Arg-111 participates in isopentenyl diphosphate binding. Lys-198, Thr-199, Gln-237, Lys-254, and Lys-263 together coordinate dimethylallyl diphosphate.

This sequence belongs to the FPP/GGPP synthase family. Requires Mg(2+) as cofactor.

The protein resides in the cytoplasm. The catalysed reaction is isopentenyl diphosphate + dimethylallyl diphosphate = (2E)-geranyl diphosphate + diphosphate. It carries out the reaction isopentenyl diphosphate + (2E)-geranyl diphosphate = (2E,6E)-farnesyl diphosphate + diphosphate. Its pathway is isoprenoid biosynthesis; farnesyl diphosphate biosynthesis; farnesyl diphosphate from geranyl diphosphate and isopentenyl diphosphate: step 1/1. It participates in isoprenoid biosynthesis; geranyl diphosphate biosynthesis; geranyl diphosphate from dimethylallyl diphosphate and isopentenyl diphosphate: step 1/1. In terms of biological role, catalyzes the sequential condensation of isopentenyl pyrophosphate with the allylic pyrophosphates, dimethylallyl pyrophosphate, and then with the resultant geranylpyrophosphate to the ultimate product farnesyl pyrophosphate. In Zea mays (Maize), this protein is Farnesyl pyrophosphate synthase (FPS).